A 95-amino-acid chain; its full sequence is UPF0132 membrane protein AF_0736 (95 aa).

A run of 3 helical transmembrane segments spans residues 2-22, 32-52, and 55-75; these read CYTL…SPFV, TFST…GALL, and VVMA…SRGE.

The protein belongs to the UPF0132 family.

The protein localises to the cell membrane. The polypeptide is UPF0132 membrane protein AF_0736 (Archaeoglobus fulgidus (strain ATCC 49558 / DSM 4304 / JCM 9628 / NBRC 100126 / VC-16)).